Consider the following 40-residue polypeptide: MISDVQLAIFSNVLGVFLFLLVVAYHYINANTGKPSAKAK.

The Lumenal segment spans residues 1–4; that stretch reads MISD. Residues 5–25 form a helical membrane-spanning segment; sequence VQLAIFSNVLGVFLFLLVVAY. The Cytoplasmic segment spans residues 26–40; sequence HYINANTGKPSAKAK.

The protein belongs to the OST4 family. As to quaternary structure, component of the oligosaccharyltransferase (OST) complex.

It is found in the endoplasmic reticulum membrane. Subunit of the oligosaccharyl transferase (OST) complex that catalyzes the initial transfer of a defined glycan (Glc(3)Man(9)GlcNAc(2) in eukaryotes) from the lipid carrier dolichol-pyrophosphate to an asparagine residue within an Asn-X-Ser/Thr consensus motif in nascent polypeptide chains, the first step in protein N-glycosylation. N-glycosylation occurs cotranslationally and the complex associates with the Sec61 complex at the channel-forming translocon complex that mediates protein translocation across the endoplasmic reticulum (ER). All subunits are required for a maximal enzyme activity. This is Dolichyl-diphosphooligosaccharide--protein glycosyltransferase subunit 4 from Drosophila yakuba (Fruit fly).